Here is a 219-residue protein sequence, read N- to C-terminus: MLHLVIADSELELAPKSIVDHPAIVNYAKRRNKKPEEVLLDSTYHHSALKKLEDGERRGRPDIVHVCLLNALESIANKEGKLRVYVHTRNDEVIYIKPETRIPRNYNRFVGLMESLFKNGVVPEGLELLRMEEKSLAELIDEIKPDGVFVMHENGESMKPQEFGKVLAGLQSPLVVVGGFPHGDFRSEIPGKKISLYKAPLMAWTVVNEIIINFEHWVL.

Residues Gly-178, Gly-183, and 196-201 (LYKAPL) each bind S-adenosyl-L-methionine.

This sequence belongs to the class IV-like SAM-binding methyltransferase superfamily. RNA methyltransferase NEP1 family. As to quaternary structure, homodimer.

It catalyses the reaction a pseudouridine in rRNA + S-adenosyl-L-methionine = an N(1)-methylpseudouridine in rRNA + S-adenosyl-L-homocysteine + H(+). Methyltransferase involved in ribosomal biogenesis. Specifically catalyzes the N1-methylation of the pseudouridine corresponding to position 914 in M.jannaschii 16S rRNA. The chain is Ribosomal RNA small subunit methyltransferase Nep1 from Thermococcus onnurineus (strain NA1).